A 298-amino-acid chain; its full sequence is N-acetylmuramic acid 6-phosphate etherase (298 aa).

The SIS domain maps to 55–218 (IHTQVSGGGR…STGLMIKSGK (164 aa)). Residue Glu83 is the Proton donor of the active site. The active site involves Glu114.

This sequence belongs to the GCKR-like family. MurNAc-6-P etherase subfamily. In terms of assembly, homodimer.

It catalyses the reaction N-acetyl-D-muramate 6-phosphate + H2O = N-acetyl-D-glucosamine 6-phosphate + (R)-lactate. Its pathway is amino-sugar metabolism; 1,6-anhydro-N-acetylmuramate degradation. It participates in amino-sugar metabolism; N-acetylmuramate degradation. The protein operates within cell wall biogenesis; peptidoglycan recycling. Specifically catalyzes the cleavage of the D-lactyl ether substituent of MurNAc 6-phosphate, producing GlcNAc 6-phosphate and D-lactate. Together with AnmK, is also required for the utilization of anhydro-N-acetylmuramic acid (anhMurNAc) either imported from the medium or derived from its own cell wall murein, and thus plays a role in cell wall recycling. This is N-acetylmuramic acid 6-phosphate etherase from Escherichia coli O1:K1 / APEC.